The following is a 378-amino-acid chain: Flagellin E (378 aa).

Coiled-coil stretches lie at residues 98 to 139 (QSAN…KLLN) and 311 to 339 (MQNRFQHAISNLDNVHENLAASNSRIKDA).

Belongs to the bacterial flagellin family. As to quaternary structure, heteromer of multiple flagellin subunits including FlaA, FlaB, FlaC, FlaD and FlaE.

The protein localises to the secreted. Its subcellular location is the bacterial flagellum. Flagellin is the subunit protein which polymerizes to form the filaments of bacterial flagella. FlaE is not essential for flagellar synthesis and motility. The sequence is that of Flagellin E (flaE) from Vibrio cholerae serotype O1 (strain ATCC 39541 / Classical Ogawa 395 / O395).